A 390-amino-acid chain; its full sequence is Cytochrome b (390 aa).

The next 4 membrane-spanning stretches (helical) occupy residues 32–52, 76–98, 113–133, and 179–199; these read MGSLLGLCLVIQILTGIFMAM, WFLRYAHANGASFFFICMYIHMG, LWTIGVIIFILTMATAFLGYC, and FFALHYLFPFVIAAVVIMHMM. Positions 82 and 96 each coordinate heme b. The heme b site is built by His183 and His197. His202 is an a ubiquinone binding site. The next 4 helical transmembrane spans lie at 225–245, 289–309, 321–341, and 348–368; these read FVFKDLITVFVFLIVFSLFVF, LMGVITMFSAILVLLVLPFTD, LSKLFFFLFVFNFVLLGQIGA, and YILMGQISTFLYFAYFLVFIP.

The protein belongs to the cytochrome b family. In terms of assembly, fungal cytochrome b-c1 complex contains 10 subunits; 3 respiratory subunits, 2 core proteins and 5 low-molecular weight proteins. Cytochrome b-c1 complex is a homodimer. Requires heme b as cofactor.

It localises to the mitochondrion inner membrane. In terms of biological role, component of the ubiquinol-cytochrome c reductase complex (complex III or cytochrome b-c1 complex) that is part of the mitochondrial respiratory chain. The b-c1 complex mediates electron transfer from ubiquinol to cytochrome c. Contributes to the generation of a proton gradient across the mitochondrial membrane that is then used for ATP synthesis. The chain is Cytochrome b (COB) from Naumovozyma castellii (Yeast).